The chain runs to 154 residues: Hydroperoxy fatty acid reductase Gpx2 (154 aa).

Cys-34 is an active-site residue.

This sequence belongs to the glutathione peroxidase family. As to quaternary structure, monomer.

It catalyses the reaction a hydroperoxy polyunsaturated fatty acid + NADPH + H(+) = a hydroxy polyunsaturated fatty acid + NADP(+) + H2O. Its activity is regulated as follows. Mercaptosuccinate, pCMB, and nethylmaleimide act as inhibitors of the catalytic activity. Hydroperoxy fatty acid reductase essential for the removal of lipid hydroperoxides under normal and stress conditions, leading to the protection of membrane integrity. The sequence is that of Hydroperoxy fatty acid reductase Gpx2 (gpx2) from Synechocystis sp. (strain ATCC 27184 / PCC 6803 / Kazusa).